The following is a 140-amino-acid chain: MIDIQGIKEALPHRYPMLLVDRVLEVSEDTIVAIKNVTINEPFFNGHFPQYPVMPGVLIMEALAQTAGVLELSKPENKGKLVFYAGMDKVKFKKQVVPGDQLVMTATFVKRRGTIAVVEAKAEVDGKLAASGTLTFAIGN.

The active site involves His-47.

The protein belongs to the thioester dehydratase family. FabZ subfamily.

Its subcellular location is the cytoplasm. It catalyses the reaction a (3R)-hydroxyacyl-[ACP] = a (2E)-enoyl-[ACP] + H2O. Its function is as follows. Involved in unsaturated fatty acids biosynthesis. Catalyzes the dehydration of short chain beta-hydroxyacyl-ACPs and long chain saturated and unsaturated beta-hydroxyacyl-ACPs. This is 3-hydroxyacyl-[acyl-carrier-protein] dehydratase FabZ from Streptococcus pneumoniae (strain 70585).